The sequence spans 223 residues: ATP phosphoribosyltransferase (223 aa).

This sequence belongs to the ATP phosphoribosyltransferase family. Short subfamily. In terms of assembly, heteromultimer composed of HisG and HisZ subunits.

It localises to the cytoplasm. The enzyme catalyses 1-(5-phospho-beta-D-ribosyl)-ATP + diphosphate = 5-phospho-alpha-D-ribose 1-diphosphate + ATP. It participates in amino-acid biosynthesis; L-histidine biosynthesis; L-histidine from 5-phospho-alpha-D-ribose 1-diphosphate: step 1/9. Catalyzes the condensation of ATP and 5-phosphoribose 1-diphosphate to form N'-(5'-phosphoribosyl)-ATP (PR-ATP). Has a crucial role in the pathway because the rate of histidine biosynthesis seems to be controlled primarily by regulation of HisG enzymatic activity. The sequence is that of ATP phosphoribosyltransferase from Halothermothrix orenii (strain H 168 / OCM 544 / DSM 9562).